Here is a 610-residue protein sequence, read N- to C-terminus: UvrABC system protein C (610 aa).

One can recognise a GIY-YIG domain in the interval 16–94 (SQPGVYRMYD…IKLYQPRYNV (79 aa)). A UVR domain is found at 204-239 (DQVLTQLISRMETASQNLEFEEAARIRDQIQAVRRV).

This sequence belongs to the UvrC family. As to quaternary structure, interacts with UvrB in an incision complex.

Its subcellular location is the cytoplasm. In terms of biological role, the UvrABC repair system catalyzes the recognition and processing of DNA lesions. UvrC both incises the 5' and 3' sides of the lesion. The N-terminal half is responsible for the 3' incision and the C-terminal half is responsible for the 5' incision. The protein is UvrABC system protein C of Escherichia coli O1:K1 / APEC.